The sequence spans 427 residues: Adenylosuccinate synthetase (427 aa).

GTP-binding positions include 12-18 (GDEGKGK) and 40-42 (GHT). Catalysis depends on D13, which acts as the Proton acceptor. Mg(2+)-binding residues include D13 and G40. IMP contacts are provided by residues 13 to 16 (DEGK), 38 to 41 (NAGH), T127, R141, Q222, T237, and R301. H41 functions as the Proton donor in the catalytic mechanism. Residue 297 to 303 (VVTKRPR) participates in substrate binding. GTP is bound by residues R303, 329 to 331 (SLD), and 411 to 413 (AVG).

The protein belongs to the adenylosuccinate synthetase family. Homodimer. Mg(2+) serves as cofactor.

The protein resides in the cytoplasm. It carries out the reaction IMP + L-aspartate + GTP = N(6)-(1,2-dicarboxyethyl)-AMP + GDP + phosphate + 2 H(+). It participates in purine metabolism; AMP biosynthesis via de novo pathway; AMP from IMP: step 1/2. Functionally, plays an important role in the de novo pathway of purine nucleotide biosynthesis. Catalyzes the first committed step in the biosynthesis of AMP from IMP. The sequence is that of Adenylosuccinate synthetase from Leuconostoc citreum (strain KM20).